The chain runs to 371 residues: Uroporphyrinogen decarboxylase (371 aa).

The span at 1 to 14 (MARWATMSTETTGT) shows a compositional bias: polar residues. A disordered region spans residues 1–30 (MARWATMSTETTGTGARDEGPRPGDPADSP). Substrate is bound by residues 49–53 (RQAGR), Asp-98, Tyr-173, Ser-228, and His-342.

Belongs to the uroporphyrinogen decarboxylase family. In terms of assembly, homodimer.

Its subcellular location is the cytoplasm. The catalysed reaction is uroporphyrinogen III + 4 H(+) = coproporphyrinogen III + 4 CO2. The protein operates within porphyrin-containing compound metabolism; protoporphyrin-IX biosynthesis; coproporphyrinogen-III from 5-aminolevulinate: step 4/4. In terms of biological role, catalyzes the decarboxylation of four acetate groups of uroporphyrinogen-III to yield coproporphyrinogen-III. In Salinispora tropica (strain ATCC BAA-916 / DSM 44818 / JCM 13857 / NBRC 105044 / CNB-440), this protein is Uroporphyrinogen decarboxylase.